The chain runs to 1412 residues: DNA-directed RNA polymerase subunit beta' (1412 aa).

Positions 70, 72, 85, and 88 each coordinate Zn(2+). The Mg(2+) site is built by D460, D462, and D464. Zn(2+) is bound by residues C819, C893, C900, and C903. Residues 1391–1412 form a disordered region; the sequence is AEESFEFGTPETPAAEQQHSGE.

The protein belongs to the RNA polymerase beta' chain family. In terms of assembly, the RNAP catalytic core consists of 2 alpha, 1 beta, 1 beta' and 1 omega subunit. When a sigma factor is associated with the core the holoenzyme is formed, which can initiate transcription. It depends on Mg(2+) as a cofactor. The cofactor is Zn(2+).

The catalysed reaction is RNA(n) + a ribonucleoside 5'-triphosphate = RNA(n+1) + diphosphate. In terms of biological role, DNA-dependent RNA polymerase catalyzes the transcription of DNA into RNA using the four ribonucleoside triphosphates as substrates. This chain is DNA-directed RNA polymerase subunit beta', found in Paraburkholderia xenovorans (strain LB400).